A 392-amino-acid chain; its full sequence is Alanine--glyoxylate aminotransferase (392 aa).

T9 is subject to Phosphothreonine. K209 carries the N6-(pyridoxal phosphate)lysine modification. Residue K225 is modified to N6-acetyllysine; alternate. Residue K225 is modified to N6-succinyllysine; alternate. Residues K234 and K312 each carry the N6-acetyllysine modification. R360 lines the substrate pocket.

Belongs to the class-V pyridoxal-phosphate-dependent aminotransferase family. As to quaternary structure, homodimer. The cofactor is pyridoxal 5'-phosphate. As to expression, liver.

It is found in the peroxisome. The catalysed reaction is L-serine + pyruvate = 3-hydroxypyruvate + L-alanine. The enzyme catalyses glyoxylate + L-alanine = glycine + pyruvate. Its activity is regulated as follows. Alanine--glyoxylate aminotransferase activity is inhibited by 1 mM (aminooxy)acetic acid by 97.5%. Functionally, peroxisomal aminotransferase that catalyzes the transamination of glyoxylate to glycine and contributes to the glyoxylate detoxification. Also catalyzes the transamination between L-serine and pyruvate and contributes to gluconeogenesis from the L-serine metabolism. The polypeptide is Alanine--glyoxylate aminotransferase (Homo sapiens (Human)).